Reading from the N-terminus, the 345-residue chain is Transcription factor MYB106 (345 aa).

HTH myb-type domains follow at residues 9–61 and 62–116; these read KAGL…TNYL and RPDI…KKRL. 2 DNA-binding regions (H-T-H motif) span residues 37 to 61 and 89 to 112; these read WRSL…TNYL and WSAI…NTHL.

Expressed in trichomes, stems, carpels, petals and stamens.

The protein localises to the nucleus. Functions as a repressor of epidermal cell outgrowth and negatively regulate trichome branch formation. Acts both as a positive and a negative regulator of cellular outgrowth. Promotes both trichome expansion and branch formation. Coordinately with WIN1/SHN1, participates in the regulation of cuticle biosynthesis and wax accumulation in reproductive organs and trichomes. Functions in cuticle nanoridge formation in petals and stamens, and in morphogenesis of petal conical cells and trichomes. May play a role in the regulation of cuticle formation in vegetative organs. This Arabidopsis thaliana (Mouse-ear cress) protein is Transcription factor MYB106.